The sequence spans 187 residues: Elongation factor P (187 aa).

It belongs to the elongation factor P family.

The protein localises to the cytoplasm. The protein operates within protein biosynthesis; polypeptide chain elongation. Functionally, involved in peptide bond synthesis. Stimulates efficient translation and peptide-bond synthesis on native or reconstituted 70S ribosomes in vitro. Probably functions indirectly by altering the affinity of the ribosome for aminoacyl-tRNA, thus increasing their reactivity as acceptors for peptidyl transferase. The polypeptide is Elongation factor P (Rhodospirillum rubrum (strain ATCC 11170 / ATH 1.1.1 / DSM 467 / LMG 4362 / NCIMB 8255 / S1)).